The sequence spans 304 residues: Tyrosine recombinase XerC (304 aa).

One can recognise a Core-binding (CB) domain in the interval 6–92 (NKLYLQAQAY…VLRQWFAYLV (87 aa)). Residues 113-292 (HLPKNIDAER…DFQHLAKIYD (180 aa)) enclose the Tyr recombinase domain. Catalysis depends on residues arginine 152, lysine 176, histidine 244, arginine 247, and histidine 270. Tyrosine 279 serves as the catalytic O-(3'-phospho-DNA)-tyrosine intermediate.

This sequence belongs to the 'phage' integrase family. XerC subfamily. Forms a cyclic heterotetrameric complex composed of two molecules of XerC and two molecules of XerD.

The protein localises to the cytoplasm. Site-specific tyrosine recombinase, which acts by catalyzing the cutting and rejoining of the recombining DNA molecules. The XerC-XerD complex is essential to convert dimers of the bacterial chromosome into monomers to permit their segregation at cell division. It also contributes to the segregational stability of plasmids. The polypeptide is Tyrosine recombinase XerC (Haemophilus ducreyi (strain 35000HP / ATCC 700724)).